The chain runs to 269 residues: Ubiquinone/menaquinone biosynthesis C-methyltransferase UbiE (269 aa).

Residues threonine 92, aspartate 113, and 141–142 (NA) each bind S-adenosyl-L-methionine.

The protein belongs to the class I-like SAM-binding methyltransferase superfamily. MenG/UbiE family.

It catalyses the reaction a 2-demethylmenaquinol + S-adenosyl-L-methionine = a menaquinol + S-adenosyl-L-homocysteine + H(+). The catalysed reaction is a 2-methoxy-6-(all-trans-polyprenyl)benzene-1,4-diol + S-adenosyl-L-methionine = a 5-methoxy-2-methyl-3-(all-trans-polyprenyl)benzene-1,4-diol + S-adenosyl-L-homocysteine + H(+). The protein operates within quinol/quinone metabolism; menaquinone biosynthesis; menaquinol from 1,4-dihydroxy-2-naphthoate: step 2/2. It functions in the pathway cofactor biosynthesis; ubiquinone biosynthesis. Its function is as follows. Methyltransferase required for the conversion of demethylmenaquinol (DMKH2) to menaquinol (MKH2) and the conversion of 2-polyprenyl-6-methoxy-1,4-benzoquinol (DDMQH2) to 2-polyprenyl-3-methyl-6-methoxy-1,4-benzoquinol (DMQH2). This is Ubiquinone/menaquinone biosynthesis C-methyltransferase UbiE from Brucella suis (strain ATCC 23445 / NCTC 10510).